The primary structure comprises 330 residues: Small ribosomal subunit protein mS35 (330 aa).

Positions 50–73 (AAGKGVRGQMKPRRQAGEPRTERM) are disordered. Basic and acidic residues predominate over residues 64–73 (QAGEPRTERM).

It belongs to the mitochondrion-specific ribosomal protein mS35 family. As to quaternary structure, component of the mitochondrial ribosome small subunit (28S) which comprises a 12S rRNA and about 30 distinct proteins.

Its subcellular location is the mitochondrion. This chain is Small ribosomal subunit protein mS35 (mrps35), found in Danio rerio (Zebrafish).